Here is a 329-residue protein sequence, read N- to C-terminus: Small ribosomal subunit protein uS2 (329 aa).

This sequence belongs to the universal ribosomal protein uS2 family.

The protein is Small ribosomal subunit protein uS2 of Bradyrhizobium sp. (strain ORS 278).